The primary structure comprises 71 residues: Calcium dodecin (71 aa).

Ca(2+) is bound at residue Glu18.

It belongs to the dodecin family. As to quaternary structure, homododecamer; 12 subunits assemble to form a hollow sphere with a diameter of about 75 Angstroms. Calcium ions are bound at the interface between three subunits.

Binds calcium ions. May play a role in sequestering additional small ligands. This Mycobacterium tuberculosis (strain ATCC 25618 / H37Rv) protein is Calcium dodecin (secE2).